The sequence spans 136 residues: Peptide methionine sulfoxide reductase MsrB (136 aa).

A MsrB domain is found at 7–129 (SSSHENTLTE…NSASLSFTDD (123 aa)). Residues Cys-46, Cys-49, Cys-95, and Cys-98 each coordinate Zn(2+). Catalysis depends on Cys-118, which acts as the Nucleophile.

The protein belongs to the MsrB Met sulfoxide reductase family. Zn(2+) serves as cofactor.

It catalyses the reaction L-methionyl-[protein] + [thioredoxin]-disulfide + H2O = L-methionyl-(R)-S-oxide-[protein] + [thioredoxin]-dithiol. The chain is Peptide methionine sulfoxide reductase MsrB from Erwinia tasmaniensis (strain DSM 17950 / CFBP 7177 / CIP 109463 / NCPPB 4357 / Et1/99).